The chain runs to 301 residues: Homoserine kinase (301 aa).

ATP is bound at residue 81-91 (RPSSGLGSSAA).

The protein belongs to the GHMP kinase family. Homoserine kinase subfamily.

It localises to the cytoplasm. The enzyme catalyses L-homoserine + ATP = O-phospho-L-homoserine + ADP + H(+). Its pathway is amino-acid biosynthesis; L-threonine biosynthesis; L-threonine from L-aspartate: step 4/5. Catalyzes the ATP-dependent phosphorylation of L-homoserine to L-homoserine phosphate. The polypeptide is Homoserine kinase (Halobacterium salinarum (strain ATCC 29341 / DSM 671 / R1)).